Here is a 226-residue protein sequence, read N- to C-terminus: Protein YOP1 homolog (226 aa).

The interval 1–25 (MRMSKLYKNKEKENEKPSNEPPIKQ) is disordered. The Cytoplasmic portion of the chain corresponds to 1 to 72 (MRMSKLYKNK…IEFGYKLGIK (72 aa)). The segment covering 8–18 (KNKEKENEKPS) has biased composition (basic and acidic residues). A helical membrane pass occupies residues 73 to 92 (PSYIVVFGGSALFISLVLGW). The Lumenal portion of the chain corresponds to 93 to 94 (GA). A helical transmembrane segment spans residues 95–113 (ALICNLVGFAYPAYQSFKA). The Cytoplasmic portion of the chain corresponds to 114 to 123 (VESQGHAETK). A helical transmembrane segment spans residues 124-140 (LWLTYWVVFSLFFFIEY). The Lumenal portion of the chain corresponds to 141-143 (LID). Residues 144-162 (IILFWIPFYYVIKLLFLLY) traverse the membrane as a helical segment. Residues 163-226 (LYMPQVRGAE…VQEGVRRRNV (64 aa)) lie on the Cytoplasmic side of the membrane.

This sequence belongs to the DP1 family. As to quaternary structure, may form oligomers.

The protein localises to the endoplasmic reticulum membrane. Required to generate and maintain the structure of the tubular endoplasmic reticulum network and the digestive (food) vacuole. Induces high curvature in membranes and causes membrane tubule formation. In Plasmodium berghei (strain Anka), this protein is Protein YOP1 homolog.